An 833-amino-acid polypeptide reads, in one-letter code: Scavenger receptor class F member 2 (833 aa).

Positions 1–33 (MEGAGSRGAGPARRQGARGLGLLLLLWLLPGLA) are cleaved as a signal peptide. Over 34–433 (APQDLNPRGR…ACHLETNQRK (400 aa)) the chain is Extracellular. 6 consecutive EGF-like domains span residues 63 to 102 (LGDECGIAVCEGNSTCSENEVCVRPGECRCRHGYFGANCD), 114 to 145 (CKERCSCHPHGQCEDVTGQCTCHARRWGARCE), 140 to 174 (WGARCEHACQCQHGTCHPRSGACRCEPGWWGAQCA), 175 to 204 (SACYCSATSRCDPQTGACLCHVGWWGRSCN), 205 to 233 (NQCACNSSPCEQQSGRCQCRERMFGARCD), and 228 to 262 (FGARCDRYCQCSHGRCHPVDGTCACDPGYRGKYCR). 18 disulfides stabilise this stretch: Cys-67-Cys-78, Cys-72-Cys-90, Cys-92-Cys-101, Cys-118-Cys-126, Cys-120-Cys-133, Cys-135-Cys-144, Cys-148-Cys-155, Cys-150-Cys-162, Cys-164-Cys-173, Cys-177-Cys-185, Cys-179-Cys-192, Cys-194-Cys-203, Cys-207-Cys-214, Cys-209-Cys-221, Cys-223-Cys-232, Cys-236-Cys-243, Cys-238-Cys-250, and Cys-252-Cys-261. Asn-75 is a glycosylation site (N-linked (GlcNAc...) asparagine). N-linked (GlcNAc...) asparagine glycosylation is found at Asn-302 and Asn-357. One can recognise an EGF-like 7 domain in the interval 364–395 (CAFVCSDCGSGHCDFQSGRCLCSPGVHGPHCN). Disulfide bonds link Cys-368–Cys-376, Cys-371–Cys-383, and Cys-385–Cys-394. Residue Asn-395 is glycosylated (N-linked (GlcNAc...) asparagine). Residues 434–454 (GVMGAGALLTLLLGLLLSLLG) form a helical membrane-spanning segment. Topologically, residues 455-833 (CCCACRGKDS…SRAGTAPGAS (379 aa)) are cytoplasmic. A phosphoserine mark is found at Ser-538 and Ser-600. The disordered stretch occupies residues 578–833 (SLEPTGTSTP…SRAGTAPGAS (256 aa)). At Tyr-615 the chain carries Phosphotyrosine. A compositionally biased stretch (basic and acidic residues) spans 619–630 (ARREARPARTRN). Phosphoserine occurs at positions 638, 640, and 695. Thr-712 is subject to Phosphothreonine. The segment covering 748–761 (ELRDKTRSLGRAEK) has biased composition (basic and acidic residues). A compositionally biased stretch (low complexity) spans 781 to 798 (ASASEASGSEKAAASAPA). A compositionally biased stretch (basic residues) spans 804–816 (KKTPIQKPPRKKS).

In terms of assembly, homophilic and heterophilic interaction via its extracellular domain. Interacts with SCARF1. The heterophilic interaction with SCARF1, which is stronger than the homophilic interaction with itself, is suppressed by the presence of SCARF1 ligand such as Ac-LDL.

The protein resides in the membrane. Its function is as follows. Probable adhesion protein, which mediates homophilic and heterophilic interactions. In contrast to SCARF1, it poorly mediates the binding and degradation of acetylated low density lipoprotein (Ac-LDL). The sequence is that of Scavenger receptor class F member 2 (Scarf2) from Mus musculus (Mouse).